The following is a 223-amino-acid chain: Putative germin-like protein 2-2 (223 aa).

Residues 1-28 (MAAVGACFLQQLAVVALLALWCSHGAIA) form the signal peptide. A disulfide bond links Cys38 and Cys53. The Cupin type-1 domain maps to 67 to 217 (SGLHMAGNTT…AFQVDKNIID (151 aa)). N-linked (GlcNAc...) asparagine glycosylation is found at Asn74 and Asn82. Mn(2+) contacts are provided by His115, His117, Glu122, and His163. An N-linked (GlcNAc...) asparagine glycan is attached at Asn168.

This sequence belongs to the germin family. As to quaternary structure, oligomer (believed to be a pentamer but probably hexamer).

The protein localises to the secreted. It is found in the extracellular space. The protein resides in the apoplast. May play a role in plant defense. Probably has no oxalate oxidase activity even if the active site is conserved. In Oryza sativa subsp. japonica (Rice), this protein is Putative germin-like protein 2-2.